We begin with the raw amino-acid sequence, 146 residues long: MKEIIIYTDGACSGNPGPGGWGAVLAYGEHQKEIAGAEADTTNQRMELMAVIEALKAIKGSGWEIRVYSDSAYFINAIQKGWLENWQRNGWKNSKKEDVANQDLWKALIPLLRKNRVRVEKVKGHSGDRWNERCDQLARNAIKSLG.

The RNase H type-1 domain occupies 1–143 (MKEIIIYTDG…CDQLARNAIK (143 aa)). Mg(2+) contacts are provided by Asp9, Glu47, Asp70, and Asp135.

This sequence belongs to the RNase H family. In terms of assembly, monomer. The cofactor is Mg(2+).

The protein localises to the cytoplasm. The catalysed reaction is Endonucleolytic cleavage to 5'-phosphomonoester.. Its function is as follows. Endonuclease that specifically degrades the RNA of RNA-DNA hybrids. This Syntrophomonas wolfei subsp. wolfei (strain DSM 2245B / Goettingen) protein is Ribonuclease H.